Reading from the N-terminus, the 564-residue chain is MAGVCDAAAPGEGGGGGADGPERTGRGEAEQPGGGGHGPAPQHTETLGFYESDRRREKRRGRAELSLLRFLSAELTRGYFLEHNEAKYTERRERVYTCMRIPRELEKLMFFGIFLCLDAFLYVFTLLPLRVFLALFRLLTLPCYGLRDRRLLQPAQVCDILKGVILVICYFMMHYVDYSMMYHLIRGQSVIKLYIIYNMLEVADRLFSSFGQDILDALYWTATEPKERKRAHIGVIPHFFMAVLYVFLHAILIMVQATTLNVAFNSHNKSLLTIMMSNNFVEIKGSVFKKFEKNNLFQMSNSDIKERFTNYVLLLIVCLRNMEQFSWNPDHLWVLFPDVCMVIASEIAVDIVKHAFITKFNDITADVYSEYRASLAFDLVSSRQKNAYTDYSDSVARRMGFIPLPLAVLLIRVVTSSIKVQGILSYACVILFYFGLISLKILNSIVLLGKSCQYVKEAKMEEKLFNPPPASTPGKPSSKSQSKGKPSQGLSTEENLSASVTSQPGHQKENVIPLLVTSNSDQFLTTPDGDEKDITQENSELKHRSSKKDLLEIDRFTICGNRID.

Low complexity predominate over residues 1-10; sequence MAGVCDAAAP. Residues 1-55 are disordered; the sequence is MAGVCDAAAPGEGGGGGADGPERTGRGEAEQPGGGGHGPAPQHTETLGFYESDRR. Position 2 is an N-acetylalanine (Ala-2). The span at 20–29 shows a compositional bias: basic and acidic residues; sequence GPERTGRGEA. 6 consecutive transmembrane segments (helical) span residues 108 to 128, 154 to 176, 233 to 253, 332 to 352, 400 to 420, and 429 to 449; these read LMFF…TLLP, PAQV…MHYV, IGVI…AILI, LWVL…VDIV, GFIP…SIKV, and VILF…VLLG. The disordered stretch occupies residues 464–546; it reads LFNPPPASTP…ENSELKHRSS (83 aa). Low complexity predominate over residues 473-489; that stretch reads PGKPSSKSQSKGKPSQG. Polar residues-rich tracts occupy residues 490 to 505 and 516 to 525; these read LSTE…SQPG and VTSNSDQFLT. A Phosphoserine modification is found at Ser-520. The residue at position 526 (Thr-526) is a Phosphothreonine. The segment covering 532–546 has biased composition (basic and acidic residues); that stretch reads KDITQENSELKHRSS.

This sequence belongs to the TAPT1 family. In terms of tissue distribution, ubiquitous. Expressed throughout embryo.

The protein resides in the cytoplasm. The protein localises to the cytoskeleton. Its subcellular location is the microtubule organizing center. It is found in the centrosome. It localises to the cilium basal body. The protein resides in the membrane. Its function is as follows. Plays a role in primary cilia formation. May act as a downstream effector of HOXC8 possibly by transducing or transmitting extracellular information required for axial skeletal patterning during development. May be involved in cartilage and bone development. May play a role in the differentiation of cranial neural crest cells. This chain is Transmembrane anterior posterior transformation protein 1 (Tapt1), found in Mus musculus (Mouse).